Reading from the N-terminus, the 356-residue chain is uncharacterized protein (356 aa).

This is an uncharacterized protein from Saccharolobus islandicus (Sulfolobus islandicus).